Reading from the N-terminus, the 426-residue chain is Enolase (426 aa).

Q163 is a binding site for (2R)-2-phosphoglycerate. E205 functions as the Proton donor in the catalytic mechanism. Mg(2+)-binding residues include D242, E285, and D312. The (2R)-2-phosphoglycerate site is built by K337, R366, S367, and K388. The active-site Proton acceptor is K337.

This sequence belongs to the enolase family. It depends on Mg(2+) as a cofactor.

Its subcellular location is the cytoplasm. The protein resides in the secreted. It is found in the cell surface. It carries out the reaction (2R)-2-phosphoglycerate = phosphoenolpyruvate + H2O. Its pathway is carbohydrate degradation; glycolysis; pyruvate from D-glyceraldehyde 3-phosphate: step 4/5. In terms of biological role, catalyzes the reversible conversion of 2-phosphoglycerate (2-PG) into phosphoenolpyruvate (PEP). It is essential for the degradation of carbohydrates via glycolysis. The sequence is that of Enolase from Rhodospirillum centenum (strain ATCC 51521 / SW).